A 468-amino-acid polypeptide reads, in one-letter code: MNKGKIKQIIGSVMDISFESGNMPEIYNAVEIQTKVNGKDVTITAEVQQHIGDNTVRAISLQSTDGLKRGLEVTDTGIPISVPVGTKTLGRIFNVLGEAIDELGDLPKDVKKMPIHRNAPTYEEIKPKTEIFETGIKVIDLLAPYIKGGKTGLFGGAGVGKTVLIQELINNIAKQHGGFSVFAGVGERTREGNDLWNEMKESGVIDKTVLCFGQMNEPPGARLRVALSALTMAENFRDESGSDILLFVDNIFRFSQAGSEVSALLGRMPSAVGYQPTLSTEMGGLQERITSTTRGSITSVQAIYVPADDLTDPAPATAFTHLDATTVLSRAISEKGIYPAVDPLDSTSRIMNPQIVGEEHYSTAREVQRILQRYKDLQDIIAILGMDELSEDDKILVARARRLEKFLSQPFHVAEQFTGRPGKYVKLEDTIRSFKGIIEGKYDSLPEQAFYMVGSIDEVIEAAKQLKG.

Residue 155 to 162 (GGAGVGKT) coordinates ATP.

This sequence belongs to the ATPase alpha/beta chains family. As to quaternary structure, F-type ATPases have 2 components, CF(1) - the catalytic core - and CF(0) - the membrane proton channel. CF(1) has five subunits: alpha(3), beta(3), gamma(1), delta(1), epsilon(1). CF(0) has three main subunits: a(1), b(2) and c(9-12). The alpha and beta chains form an alternating ring which encloses part of the gamma chain. CF(1) is attached to CF(0) by a central stalk formed by the gamma and epsilon chains, while a peripheral stalk is formed by the delta and b chains.

The protein localises to the cell inner membrane. It carries out the reaction ATP + H2O + 4 H(+)(in) = ADP + phosphate + 5 H(+)(out). Functionally, produces ATP from ADP in the presence of a proton gradient across the membrane. The catalytic sites are hosted primarily by the beta subunits. The sequence is that of ATP synthase subunit beta from Leptospira biflexa serovar Patoc (strain Patoc 1 / ATCC 23582 / Paris).